Here is a 339-residue protein sequence, read N- to C-terminus: Putative P2Y purinoceptor 10 (339 aa).

Topologically, residues 1-39 are extracellular; that stretch reads MANLDKYTETFKMGSNSTSTAEIYCNVTNVKFQYSLYAT. Residues N16 and N26 are each glycosylated (N-linked (GlcNAc...) asparagine). A helical transmembrane segment spans residues 40–60; sequence TYILIFIPGLLANSAALWVLC. Over 61 to 68 the chain is Cytoplasmic; it reads RFISKKNK. The helical transmembrane segment at 69–89 threads the bilayer; the sequence is AIIFMINLSVADLAHVLSLPL. The Extracellular portion of the chain corresponds to 90-103; it reads RIYYYISHHWPFQR. Residues 104-124 form a helical membrane-spanning segment; it reads ALCLLCFYLKYLNMYASICFL. Cysteines 106 and 181 form a disulfide. Residues 125–149 are Cytoplasmic-facing; the sequence is TCISLQRCFFLLKPFRARDWKRRYD. A helical membrane pass occupies residues 150–170; the sequence is VGISAAIWIVVGTACLPFPIL. The Extracellular segment spans residues 171–193; that stretch reads RSTDLNNNKSCFADLGYKQMNAV. N178 is a glycosylation site (N-linked (GlcNAc...) asparagine). A helical membrane pass occupies residues 194 to 214; sequence ALVGMITVAELAGFVIPVIII. Residues 215–244 lie on the Cytoplasmic side of the membrane; sequence AWCTWKTTISLRQPPMAFQGISERQKALRM. The chain crosses the membrane as a helical span at residues 245–265; that stretch reads VFMCAAVFFICFTPYHINFIF. The Extracellular segment spans residues 266–288; the sequence is YTMVKETIISSCPVVRIALYFHP. The helical transmembrane segment at 289–309 threads the bilayer; the sequence is FCLCLASLCCLLDPILYYFMA. Topologically, residues 310–339 are cytoplasmic; it reads SEFRDQLSRHGSSVTRSRLMSKESGSSMIG.

It belongs to the G-protein coupled receptor 1 family. In terms of tissue distribution, weakly expressed in blood leukocytes.

It is found in the cell membrane. Functionally, putative receptor for purines coupled to G-proteins. This chain is Putative P2Y purinoceptor 10 (P2RY10), found in Homo sapiens (Human).